A 310-amino-acid polypeptide reads, in one-letter code: Putative methyltransferase mtx subunit H (310 aa).

The protein belongs to the MtrH family. In terms of assembly, may be part of a complex composed of 3 subunits; MtxA, MtxH and MtxX.

In Methanosarcina acetivorans (strain ATCC 35395 / DSM 2834 / JCM 12185 / C2A), this protein is Putative methyltransferase mtx subunit H (mtxH).